The sequence spans 314 residues: Malate dehydrogenase (314 aa).

NAD(+) contacts are provided by residues 11–16 and D35; that span reads GSGNIG. R84 and R90 together coordinate substrate. NAD(+) contacts are provided by residues N97 and 120–122; that span reads ITN. N122 and R153 together coordinate substrate. Residue H177 is the Proton acceptor of the active site.

It belongs to the LDH/MDH superfamily. MDH type 3 family.

It catalyses the reaction (S)-malate + NAD(+) = oxaloacetate + NADH + H(+). Catalyzes the reversible oxidation of malate to oxaloacetate. The protein is Malate dehydrogenase of Rickettsia africae (strain ESF-5).